Consider the following 273-residue polypeptide: Putative tyrosine-protein phosphatase H16_A0669 (273 aa).

The signal sequence occupies residues 1-15 (MIKWLQRAGCLSAHA). C169 functions as the Phosphocysteine intermediate in the catalytic mechanism.

It belongs to the protein-tyrosine phosphatase family.

The catalysed reaction is O-phospho-L-tyrosyl-[protein] + H2O = L-tyrosyl-[protein] + phosphate. This Cupriavidus necator (strain ATCC 17699 / DSM 428 / KCTC 22496 / NCIMB 10442 / H16 / Stanier 337) (Ralstonia eutropha) protein is Putative tyrosine-protein phosphatase H16_A0669.